The following is a 420-amino-acid chain: O-methyltransferase penK (420 aa).

Asp285 contributes to the S-adenosyl-L-methionine binding site. The active-site Proton acceptor is the His325.

Belongs to the class I-like SAM-binding methyltransferase superfamily. Cation-independent O-methyltransferase family.

It functions in the pathway secondary metabolite biosynthesis. Its pathway is alkaloid biosynthesis. It participates in mycotoxin biosynthesis. O-methyltransferase; part of the gene cluster that mediates the biosynthesis of penigequinolones, potent insecticidal alkaloids that contain a highly modified 10-carbon prenyl group. The first stage is catalyzed by the nonribosomal peptide synthetase penN that condenses anthranilic acid and O-methyl-L-tyrosine to produce 4'-methoxycyclopeptin. 4'-methoxycyclopeptin is then converted to 4'-methoxydehydrocyclopeptin by the ketoglutarate-dependent dioxygenase penM through dehydrogenation to form a double bond between C-alpha and C-beta of the O-methyltyrosine side chain. PenM also converts its first product methoxydehydrocyclopeptin to 4'-methoxycyclopenin. The following conversion of 4'methoxycyclopenin into 4'-methoxyviridicatin is catalyzed by the cyclopenase penL. 4'-methoxyviridicatin is the precursor of quinolone natural products, and is further converted to quinolinone B. The prenyltransferase penI then catalyzes the canonical Friedel-Crafts alkylation of quinolinone B with dimethylallyl cation to yield dimethylallyl quinolone, which is subjected to FAD-dependent dehydrogenation by the FAD-linked oxidoreductase penH to yield conjugated aryl diene. The delta(3') double bond then serves as the site of the second alkylation with DMAPP catalyzed by the prenyltransferase penG to yield a carbenium ion intermediate, which can be attacked by H(2)O to yield a styrenyl quinolone containing a C3'-hydroxyprenyl chain, or undergo cyclization to yield yaequinolones J1 and J2. The conversion of the styrenyl quinolone into the tetrahydrofuran-containing yaequinolone C is performed by the FAD-dependent monooxygenase penE and involves epoxidation of the terminal C7'-C8' olefin, followed by epoxide ring opening initiated by the C3' hydroxyl group. The predicted cysteine hydrolase penJ acts as an epoxide hydrolase that enhances the rate of the 5-exo-tet cyclization step, increasing the yield of yaequinolone C. PenF catalyzes the cationic rearrangement of the epoxide formed by penE (before ring opening to produce yaequinolone C) into yaequinolone D. Finally, the short-chain dehydrogenase/reductase (SDR)-like reductase penD, catalyzes both the dehydration of yaequinolone D and the reduction of the resulting oxonium to yield penigequinolone. This is O-methyltransferase penK from Penicillium thymicola.